The chain runs to 463 residues: Argininosuccinate lyase (463 aa).

The protein belongs to the lyase 1 family. Argininosuccinate lyase subfamily.

The protein localises to the cytoplasm. It carries out the reaction 2-(N(omega)-L-arginino)succinate = fumarate + L-arginine. It functions in the pathway amino-acid biosynthesis; L-arginine biosynthesis; L-arginine from L-ornithine and carbamoyl phosphate: step 3/3. The protein is Argininosuccinate lyase of Bradyrhizobium sp. (strain ORS 278).